We begin with the raw amino-acid sequence, 725 residues long: Beta-adducin (725 aa).

Residues 1-22 (MSEDTVPEAASPPPSQGQHYFD) are disordered. A phosphoserine mark is found at Ser11 and Ser25. Thr55 is modified (phosphothreonine). Residues Ser60 and Ser344 each carry the phosphoserine modification. Positions 425-444 (KQQKEKTRWLNTPNTYLRVN) are interaction with calmodulin. The segment at 525 to 725 (AEKSRSPSTE…KSKKKEKVES (201 aa)) is disordered. Phosphoserine occurs at positions 530 and 532. Thr533 carries the post-translational modification Phosphothreonine. Ser535 carries the phosphoserine modification. Thr561 bears the Phosphothreonine mark. The segment covering 566–589 (EEYKKEVERKKLEQEQEGEKDIAT) has biased composition (basic and acidic residues). A phosphoserine mark is found at Ser594, Ser598, Ser602, and Ser606. Residues 596-621 (VKSTPASPVQSPSKAGTKSPAVSPSK) show a composition bias toward polar residues. Thr612 carries the post-translational modification Phosphothreonine. 3 positions are modified to phosphoserine: Ser614, Ser618, and Ser620. Over residues 622-631 (TSEDTKKTEV) the composition is skewed to basic and acidic residues. Phosphothreonine is present on Thr674. Phosphoserine occurs at positions 678, 685, 688, 692, 696, 698, 700, 702, and 712. A compositionally biased stretch (low complexity) spans 687-700 (TSGPLSPEGSPSKS). Residues 701–725 (PSKKKKKFRTPSFLKKSKKKEKVES) show a composition bias toward basic residues. The interval 703–720 (KKKKKFRTPSFLKKSKKK) is interaction with calmodulin.

Belongs to the aldolase class II family. Adducin subfamily. Found in a complex with ADD2, DMTN and SLC2A1. Interacts with SLC2A1. Heterodimer of an alpha and a beta subunit.

It is found in the cytoplasm. The protein resides in the cytoskeleton. It localises to the cell membrane. Its function is as follows. Membrane-cytoskeleton-associated protein that promotes the assembly of the spectrin-actin network. Binds to the erythrocyte membrane receptor SLC2A1/GLUT1 and may therefore provide a link between the spectrin cytoskeleton to the plasma membrane. Binds to calmodulin. Calmodulin binds preferentially to the beta subunit. The polypeptide is Beta-adducin (Add2) (Mus musculus (Mouse)).